The following is a 576-amino-acid chain: Trehalase (576 aa).

Positions methionine 1–alanine 20 are cleaved as a signal peptide. Asparagine 75 carries an N-linked (GlcNAc...) asparagine glycan. Residues arginine 165, tryptophan 172–aspartate 173, asparagine 209, and arginine 218–glutamine 220 contribute to the substrate site. Asparagine 258 carries N-linked (GlcNAc...) asparagine glycosylation. Substrate is bound by residues arginine 283–glutamate 285 and glycine 316. Aspartate 318 functions as the Proton donor/acceptor in the catalytic mechanism. A glycan (N-linked (GlcNAc...) asparagine) is linked at asparagine 366. The active-site Proton donor/acceptor is glutamate 511. Residue glutamate 526 coordinates substrate. Residue serine 553 is the site of GPI-anchor amidated serine attachment. Residues glycine 554–glutamine 576 constitute a propeptide, removed in mature form.

The protein belongs to the glycosyl hydrolase 37 family. As to quaternary structure, homodimer; disulfide-linked.

The protein localises to the cell membrane. The catalysed reaction is alpha,alpha-trehalose + H2O = alpha-D-glucose + beta-D-glucose. In terms of biological role, intestinal trehalase is probably involved in the hydrolysis of ingested trehalose. The protein is Trehalase of Mus musculus (Mouse).